Consider the following 224-residue polypeptide: Peroxiredoxin-6 (224 aa).

The region spanning 5 to 169 is the Thioredoxin domain; the sequence is LLLGDVAPNF…ILRVVISLQL (165 aa). The tract at residues 31-40 is required and sufficient for targeting to lysosomes and lamellar bodies; it reads DSWGILFSHP. Phosphothreonine is present on Thr-44. Cys-47 functions as the Cysteine sulfenic acid (-SOH) intermediate; for peroxidase activity in the catalytic mechanism. The residue at position 63 (Lys-63) is an N6-acetyllysine. Tyr-89 is subject to Phosphotyrosine. Asp-140 functions as the For phospholipase activity in the catalytic mechanism. Position 177 is a phosphothreonine; by MAPK (Thr-177). Lys-209 carries the N6-acetyllysine; alternate modification. Lys-209 is modified (N6-succinyllysine; alternate).

Belongs to the peroxiredoxin family. Prx6 subfamily. Homodimer. Interacts with GSTP1; mediates PRDX6 glutathionylation and regeneration. Interacts with APEX1. Interacts with STH. May interact with FAM168B. May interact with HTR2A. In terms of processing, irreversibly inactivated by overoxidation of Cys-47 to sulfinic acid (Cys-SO(2)H) and sulfonic acid (Cys-SO(3)H) forms upon oxidative stress. Post-translationally, phosphorylation at Thr-177 by MAP kinases increases the phospholipase activity of the enzyme. The phosphorylated form exhibits a greater lysophosphatidylcholine acyltransferase activity compared to the non-phosphorylated form.

The protein localises to the cytoplasm. It is found in the lysosome. It carries out the reaction a hydroperoxide + 2 glutathione = an alcohol + glutathione disulfide + H2O. The catalysed reaction is a 1,2-diacyl-sn-glycero-3-phosphocholine + H2O = a 1-acyl-sn-glycero-3-phosphocholine + a fatty acid + H(+). The enzyme catalyses a 1-acyl-sn-glycero-3-phosphocholine + an acyl-CoA = a 1,2-diacyl-sn-glycero-3-phosphocholine + CoA. It catalyses the reaction 1-hexadecanoyl-sn-glycero-3-phosphocholine + hexadecanoyl-CoA = 1,2-dihexadecanoyl-sn-glycero-3-phosphocholine + CoA. It carries out the reaction 1,2-dihexadecanoyl-sn-glycero-3-phosphocholine + H2O = 1-hexadecanoyl-sn-glycero-3-phosphocholine + hexadecanoate + H(+). In terms of biological role, thiol-specific peroxidase that catalyzes the reduction of hydrogen peroxide and organic hydroperoxides to water and alcohols, respectively. Can reduce H(2)O(2) and short chain organic, fatty acid, and phospholipid hydroperoxides. Also has phospholipase activity, and can therefore either reduce the oxidized sn-2 fatty acyl group of phospholipids (peroxidase activity) or hydrolyze the sn-2 ester bond of phospholipids (phospholipase activity). These activities are dependent on binding to phospholipids at acidic pH and to oxidized phospholipds at cytosolic pH. Plays a role in cell protection against oxidative stress by detoxifying peroxides and in phospholipid homeostasis. Exhibits acyl-CoA-dependent lysophospholipid acyltransferase which mediates the conversion of lysophosphatidylcholine (1-acyl-sn-glycero-3-phosphocholine or LPC) into phosphatidylcholine (1,2-diacyl-sn-glycero-3-phosphocholine or PC). Shows a clear preference for LPC as the lysophospholipid and for palmitoyl CoA as the fatty acyl substrate. This chain is Peroxiredoxin-6 (PRDX6), found in Pongo abelii (Sumatran orangutan).